We begin with the raw amino-acid sequence, 185 residues long: Elongation factor P (185 aa).

This sequence belongs to the elongation factor P family.

The protein resides in the cytoplasm. It functions in the pathway protein biosynthesis; polypeptide chain elongation. In terms of biological role, involved in peptide bond synthesis. Stimulates efficient translation and peptide-bond synthesis on native or reconstituted 70S ribosomes in vitro. Probably functions indirectly by altering the affinity of the ribosome for aminoacyl-tRNA, thus increasing their reactivity as acceptors for peptidyl transferase. The chain is Elongation factor P from Streptococcus uberis (strain ATCC BAA-854 / 0140J).